Reading from the N-terminus, the 285-residue chain is Ribosomal RNA small subunit methyltransferase A (285 aa).

The S-adenosyl-L-methionine site is built by histidine 27, leucine 29, glycine 54, glutamate 75, aspartate 100, and asparagine 120.

It belongs to the class I-like SAM-binding methyltransferase superfamily. rRNA adenine N(6)-methyltransferase family. RsmA subfamily.

Its subcellular location is the cytoplasm. It carries out the reaction adenosine(1518)/adenosine(1519) in 16S rRNA + 4 S-adenosyl-L-methionine = N(6)-dimethyladenosine(1518)/N(6)-dimethyladenosine(1519) in 16S rRNA + 4 S-adenosyl-L-homocysteine + 4 H(+). Its function is as follows. Specifically dimethylates two adjacent adenosines (A1518 and A1519) in the loop of a conserved hairpin near the 3'-end of 16S rRNA in the 30S particle. May play a critical role in biogenesis of 30S subunits. The chain is Ribosomal RNA small subunit methyltransferase A from Phenylobacterium zucineum (strain HLK1).